A 327-amino-acid chain; its full sequence is GTPase Obg (327 aa).

The Obg domain maps to 1-159 (MKFLDQVKIY…YVIWLQLKTI (159 aa)). An OBG-type G domain is found at 160–327 (ADVGIVGLPN…IKAKLLSYVS (168 aa)). GTP contacts are provided by residues 166–173 (GLPNAGKS), 191–195 (FTTLN), 212–215 (DIPG), 279–282 (NKTD), and 308–310 (STL). 2 residues coordinate Mg(2+): Ser-173 and Thr-193.

The protein belongs to the TRAFAC class OBG-HflX-like GTPase superfamily. OBG GTPase family. Monomer. Mg(2+) serves as cofactor.

The protein localises to the cytoplasm. Functionally, an essential GTPase which binds GTP, GDP and possibly (p)ppGpp with moderate affinity, with high nucleotide exchange rates and a fairly low GTP hydrolysis rate. Plays a role in control of the cell cycle, stress response, ribosome biogenesis and in those bacteria that undergo differentiation, in morphogenesis control. The polypeptide is GTPase Obg (Pelagibacter ubique (strain HTCC1062)).